Consider the following 128-residue polypeptide: NADH-quinone oxidoreductase subunit A (128 aa).

3 helical membrane-spanning segments follow: residues 12-32, 66-86, and 96-116; these read FAIFIISAIILCVLILTLSFL, FYLIAIFFVLFDIEAFYLYAW, and LGFYEAIIFVSVLLSGLVYLV.

Belongs to the complex I subunit 3 family. As to quaternary structure, NDH-1 is composed of 14 different subunits. Subunits NuoA, H, J, K, L, M, N constitute the membrane sector of the complex.

It localises to the cell membrane. The catalysed reaction is a quinone + NADH + 5 H(+)(in) = a quinol + NAD(+) + 4 H(+)(out). Functionally, NDH-1 shuttles electrons from NADH, via FMN and iron-sulfur (Fe-S) centers, to quinones in the respiratory chain. The immediate electron acceptor for the enzyme in this species is believed to be ubiquinone. Couples the redox reaction to proton translocation (for every two electrons transferred, four hydrogen ions are translocated across the cytoplasmic membrane), and thus conserves the redox energy in a proton gradient. In Baumannia cicadellinicola subsp. Homalodisca coagulata, this protein is NADH-quinone oxidoreductase subunit A.